Reading from the N-terminus, the 148-residue chain is Large ribosomal subunit protein cL37 (148 aa).

Residues 1–65 (MALLCFNSLP…SSHGRIVVKA (65 aa)) constitute a chloroplast transit peptide. The residue at position 66 (Ala-66) is an N-acetylalanine. The tract at residues 125-148 (LVRKRKMRKKGRWPPSKMKKNKNV) is disordered.

This sequence belongs to the chloroplast-specific ribosomal protein cL37 family. Part of the 50S ribosomal subunit.

The protein localises to the plastid. The protein resides in the chloroplast. In Arabidopsis thaliana (Mouse-ear cress), this protein is Large ribosomal subunit protein cL37 (PSRP5).